Reading from the N-terminus, the 69-residue chain is uncharacterized protein (69 aa).

In terms of domain architecture, HTH cro/C1-type spans 10-64 (IRAFRKLKGYTQEGFAKALGISVSILGEIERGNRLPSAAIIQDAADVLNISADEL). The H-T-H motif DNA-binding region spans 21–40 (QEGFAKALGISVSILGEIER).

This is an uncharacterized protein from Bacillus subtilis (strain 168).